The following is a 203-amino-acid chain: Glycerol-3-phosphate acyltransferase (203 aa).

5 helical membrane passes run 4 to 24 (IAYLLILGAYLLGSISSAVIF), 56 to 76 (LGVLMADILKGMLPVSLGFYL), 80 to 100 (ISVIGFIALAACLGHIFPVFF), 115 to 135 (IIPMGYSVAGLAVGTWLFVFL), and 149 to 169 (LIVPLYIWWFSSELTFPVALV).

This sequence belongs to the PlsY family. As to quaternary structure, probably interacts with PlsX.

It localises to the cell inner membrane. The enzyme catalyses an acyl phosphate + sn-glycerol 3-phosphate = a 1-acyl-sn-glycero-3-phosphate + phosphate. It functions in the pathway lipid metabolism; phospholipid metabolism. Functionally, catalyzes the transfer of an acyl group from acyl-phosphate (acyl-PO(4)) to glycerol-3-phosphate (G3P) to form lysophosphatidic acid (LPA). This enzyme utilizes acyl-phosphate as fatty acyl donor, but not acyl-CoA or acyl-ACP. This Glaesserella parasuis serovar 5 (strain SH0165) (Haemophilus parasuis) protein is Glycerol-3-phosphate acyltransferase.